Reading from the N-terminus, the 357-residue chain is Aspartate-semialdehyde dehydrogenase (357 aa).

Residues Thr12, Gly13, Thr14, Val15, Ser37, Ser40, Leu84, and Asp85 each coordinate NADP(+). Cys151 (acyl-thioester intermediate) is an active-site residue. Gly183 contacts NADP(+). His247 acts as the Proton acceptor in catalysis. The residue at position 323 (Ser323) is a Phosphoserine. Position 335 (Asn335) interacts with NADP(+).

It belongs to the aspartate-semialdehyde dehydrogenase family.

Its subcellular location is the cytoplasm. The protein localises to the cytosol. It is found in the nucleus. The enzyme catalyses L-aspartate 4-semialdehyde + phosphate + NADP(+) = 4-phospho-L-aspartate + NADPH + H(+). It functions in the pathway amino-acid biosynthesis; L-methionine biosynthesis via de novo pathway; L-homoserine from L-aspartate: step 2/3. The protein operates within amino-acid biosynthesis; L-threonine biosynthesis; L-threonine from L-aspartate: step 2/5. Its function is as follows. Catalyzes the NADPH-dependent formation of L-aspartate 4-semialdehyde (L-ASA) by the reductive dephosphorylation of 4-phospho-L-aspartate. Mediates the second step in the biosynthesis of amino acids that derive from aspartate (the aspartate family of amino acids), including methioinine and threonine, the latter of which is a precursor to isoleucine. The polypeptide is Aspartate-semialdehyde dehydrogenase (Schizosaccharomyces pombe (strain 972 / ATCC 24843) (Fission yeast)).